Reading from the N-terminus, the 424-residue chain is Hemagglutinin-esterase (424 aa).

An N-terminal signal peptide occupies residues 1 to 16; the sequence is MFLLPRFVLVSCIIGS. The interval 7-127 is esterase domain 1; that stretch reads FVLVSCIIGS…SNDIWMQNKG (121 aa). Residues 17–392 are Virion surface-facing; it reads LGFENPPTNV…PICVYDPLPL (376 aa). Ser40 functions as the Nucleophile in the catalytic mechanism. A disulfide bridge connects residues Cys44 and Cys65. Asn54, Asn89, Asn153, Asn236, and Asn301 each carry an N-linked (GlcNAc...) asparagine; by host glycan. 3 disulfide bridges follow: Cys113–Cys162, Cys197–Cys276, and Cys205–Cys249. The tract at residues 128-266 is receptor binding; the sequence is LFYTQVYKNM…GNYLAISNEL (139 aa). The interval 267–379 is esterase domain 2; it reads LLTVPTKAIC…RCPTAADINT (113 aa). A disulfide bridge connects residues Cys307 and Cys312. Residue Asn316 is glycosylated (N-linked (GlcNAc...) asparagine; by host). Residues Asp326 and His329 each act as charge relay system in the active site. Cys347 and Cys371 form a disulfide bridge. An N-linked (GlcNAc...) asparagine; by host glycan is attached at Asn358. Residues 393 to 413 traverse the membrane as a helical segment; it reads ILLGILLGVAVIIIVVLLLYF. Topologically, residues 414–424 are intravirion; sequence MVDNGTRLHDA. N-linked (GlcNAc...) asparagine; by host glycosylation is present at Asn417.

Belongs to the influenza type C/coronaviruses hemagglutinin-esterase family. As to quaternary structure, homodimer; disulfide-linked. Forms a complex with the M protein in the pre-Golgi. Associates then with S-M complex to form a ternary complex S-M-HE. N-glycosylated in the host RER.

Its subcellular location is the virion membrane. The protein localises to the host cell membrane. The enzyme catalyses N-acetyl-9-O-acetylneuraminate + H2O = N-acetylneuraminate + acetate + H(+). It carries out the reaction N-acetyl-4-O-acetylneuraminate + H2O = N-acetylneuraminate + acetate + H(+). Structural protein that makes short spikes at the surface of the virus. Contains receptor binding and receptor-destroying activities. Mediates de-O-acetylation of N-acetyl-4-O-acetylneuraminic acid, which is probably the receptor determinant recognized by the virus on the surface of erythrocytes and susceptible cells. This receptor-destroying activity is important for virus release as it probably helps preventing self-aggregation and ensures the efficient spread of the progeny virus from cell to cell. May serve as a secondary viral attachment protein for initiating infection, the spike protein being the major one. May become a target for both the humoral and the cellular branches of the immune system. The sequence is that of Hemagglutinin-esterase from Bovine coronavirus (strain G95) (BCoV).